A 190-amino-acid polypeptide reads, in one-letter code: Thymidylate kinase (190 aa).

7–14 (GVDTCGKS) is a binding site for ATP.

It belongs to the thymidylate kinase family.

It carries out the reaction dTMP + ATP = dTDP + ADP. Phosphorylation of dTMP to form dTDP in both de novo and salvage pathways of dTTP synthesis. This chain is Thymidylate kinase, found in Wolinella succinogenes (strain ATCC 29543 / DSM 1740 / CCUG 13145 / JCM 31913 / LMG 7466 / NCTC 11488 / FDC 602W) (Vibrio succinogenes).